Consider the following 361-residue polypeptide: dTDP-glucose 4,6-dehydratase (361 aa).

NAD(+)-binding positions include 11–12, 32–35, 58–59, 80–84, and threonine 99; these read FI, DKLT, DI, and LAAES. Serine 84 contacts substrate. Position 133 (threonine 133) interacts with substrate. Residue aspartate 134 is the Proton donor of the active site. Residues glutamate 135 and tyrosine 167 each act as proton acceptor in the active site. 167–171 serves as a coordination point for NAD(+); the sequence is YSASK. A substrate-binding site is contributed by asparagine 196. Asparagine 197 serves as a coordination point for NAD(+). Residues 206–207, 222–224, arginine 231, asparagine 266, and 296–300 contribute to the substrate site; these read KL, PIY, and DRPGH.

Belongs to the NAD(P)-dependent epimerase/dehydratase family. dTDP-glucose dehydratase subfamily. As to quaternary structure, homodimer. NAD(+) is required as a cofactor.

It carries out the reaction dTDP-alpha-D-glucose = dTDP-4-dehydro-6-deoxy-alpha-D-glucose + H2O. The protein operates within carbohydrate biosynthesis; dTDP-L-rhamnose biosynthesis. It participates in bacterial outer membrane biogenesis; LPS O-antigen biosynthesis. In terms of biological role, catalyzes the dehydration of dTDP-D-glucose to form dTDP-6-deoxy-D-xylo-4-hexulose via a three-step process involving oxidation, dehydration and reduction. The polypeptide is dTDP-glucose 4,6-dehydratase (rfbB) (Shigella flexneri).